The chain runs to 187 residues: UPF0340 protein str1894 (187 aa).

This sequence belongs to the UPF0340 family.

In Streptococcus thermophilus (strain CNRZ 1066), this protein is UPF0340 protein str1894.